The sequence spans 103 residues: Small ribosomal subunit protein uS10 (103 aa).

Belongs to the universal ribosomal protein uS10 family. Part of the 30S ribosomal subunit.

Functionally, involved in the binding of tRNA to the ribosomes. The sequence is that of Small ribosomal subunit protein uS10 from Korarchaeum cryptofilum (strain OPF8).